The primary structure comprises 527 residues: Monooxygenase aurF (527 aa).

The first 19 residues, 1-19, serve as a signal peptide directing secretion; sequence MPNPTVAIVGLGALGLVTL. The N-linked (GlcNAc...) asparagine glycan is linked to Asn-59.

Belongs to the FMO family. As to quaternary structure, might be part of an extracellular enzyme complex composed of GIP1, aurF, aurO and aurS. It depends on FAD as a cofactor.

It localises to the secreted. The protein localises to the extracellular space. It participates in pigment biosynthesis. In terms of biological role, monooxygenase; part of the gene cluster that mediates the biosynthesis of aurofusarin, a red mycelium pigment which is acting as a mycotoxin. The first step is performed by the polyketide synthase which condenses one acetyl-CoA and 6 malonyl-CoA units to form the first intermediate, the cyclic heptaketide and yellow pigment YWA1. The C2 hydroxyl group in the pyrone ring of YWA1 is probably formed during ring closure by an aldol-type cyclization reaction. The dehydratase aurZ then acts as the first tailoring enzyme in the aurofusarin biosynthetic pathway by converting YWA1 to nor-rubrofusarin. Nor-rubrofusarin is then methylated to rubrofusarin by the O-methyltransferase aurJ. Rubrofusarin is then transported across the plasma membrane by the rubrofusarin-specific pump aurT for further enzymatic processing by the extracellular complex composed of GIP1, aurF, aurO and aurS to yield aurofusarin. The polypeptide is Monooxygenase aurF (Gibberella zeae (strain ATCC MYA-4620 / CBS 123657 / FGSC 9075 / NRRL 31084 / PH-1) (Wheat head blight fungus)).